Here is a 659-residue protein sequence, read N- to C-terminus: tRNA 5-methylaminomethyl-2-thiouridine biosynthesis bifunctional protein MnmC (659 aa).

Residues 1 to 236 (MKPVMPHAQL…KWEILRGEFL (236 aa)) form a tRNA (mnm(5)s(2)U34)-methyltransferase region. The interval 267–659 (IGAGLAGCAT…FALRRLIRGK (393 aa)) is FAD-dependent cmnm(5)s(2)U34 oxidoreductase.

In the N-terminal section; belongs to the methyltransferase superfamily. tRNA (mnm(5)s(2)U34)-methyltransferase family. It in the C-terminal section; belongs to the DAO family. The cofactor is FAD.

The protein localises to the cytoplasm. It carries out the reaction 5-aminomethyl-2-thiouridine(34) in tRNA + S-adenosyl-L-methionine = 5-methylaminomethyl-2-thiouridine(34) in tRNA + S-adenosyl-L-homocysteine + H(+). Its function is as follows. Catalyzes the last two steps in the biosynthesis of 5-methylaminomethyl-2-thiouridine (mnm(5)s(2)U) at the wobble position (U34) in tRNA. Catalyzes the FAD-dependent demodification of cmnm(5)s(2)U34 to nm(5)s(2)U34, followed by the transfer of a methyl group from S-adenosyl-L-methionine to nm(5)s(2)U34, to form mnm(5)s(2)U34. The sequence is that of tRNA 5-methylaminomethyl-2-thiouridine biosynthesis bifunctional protein MnmC from Pseudomonas fluorescens (strain Pf0-1).